A 457-amino-acid chain; its full sequence is Mesentericin Y105 secretion protein MesE (457 aa).

A helical membrane pass occupies residues 22 to 42 (TLIIVPIFLLVVFIVLFSLFA).

The protein belongs to the membrane fusion protein (MFP) (TC 8.A.1) family.

Its subcellular location is the membrane. Involved in the secretion of mesentericin Y105. The polypeptide is Mesentericin Y105 secretion protein MesE (mesE) (Leuconostoc mesenteroides).